A 154-amino-acid chain; its full sequence is MGLSDGEWQLVLNVWGKVEADIPSHGQEVLISLFKGHPETLEKFDKFKHLKSEDEMKASEELKKHGVTVLTALGGILKKKGHHEAELKPLAQSHATKHKIPVKYLEFISDAIVHVLQKKHPGDFGADAQGAMKKALELFRNDMAAKYKELGFQG.

Positions 2 to 148 constitute a Globin domain; the sequence is GLSDGEWQLV…FRNDMAAKYK (147 aa). S4 carries the post-translational modification Phosphoserine. H65 lines the nitrite pocket. H65 contributes to the O2 binding site. T68 is modified (phosphothreonine). H94 contacts heme b.

Belongs to the globin family. Monomeric.

The protein resides in the cytoplasm. Its subcellular location is the sarcoplasm. The catalysed reaction is Fe(III)-heme b-[protein] + nitric oxide + H2O = Fe(II)-heme b-[protein] + nitrite + 2 H(+). It carries out the reaction H2O2 + AH2 = A + 2 H2O. Monomeric heme protein which primary function is to store oxygen and facilitate its diffusion within muscle tissues. Reversibly binds oxygen through a pentacoordinated heme iron and enables its timely and efficient release as needed during periods of heightened demand. Depending on the oxidative conditions of tissues and cells, and in addition to its ability to bind oxygen, it also has a nitrite reductase activity whereby it regulates the production of bioactive nitric oxide. Under stress conditions, like hypoxia and anoxia, it also protects cells against reactive oxygen species thanks to its pseudoperoxidase activity. The chain is Myoglobin (MB) from Callithrix jacchus (White-tufted-ear marmoset).